A 597-amino-acid chain; its full sequence is MGHRIPEETIEAIRRGVDIVDVIGEYVQLKRQGRNYFGLCPFHGEKTPSFSVSPEKQIFHCFGCGAGGNAFTFLMDIEGIPFVEAAKRLAAKAGVDLSVYELDVRGRDDGQTDEAKAMTEAHALLKRFYHHLLVHTKEGQAALDYLQARGWTKETIDRFEIGYAPDAPDAAAKLLESHSFSLPVMEKAGLLTKKEDGRYVGRFRNRIMFPIHDHRGETVGFSGRLLGEGHPKYVNSPETPVFRKGAILYHFHAARVPIRKRQEALLVEGFADVISAAQAGIDYAIATMGTSLTEEQARILRPCDTITICYDGDRAGIEAAWAAAEQLSALGCRVKVASLPNGLDPDEYIRVYGGERFAGEAGCRRPLVAFKMAYLRRGKNLQHEGERLRYIDEALREIGKLSSPVEQDYYLRQLAEEFSLSLSALHEQLSRSQRERTKPREAPDGETARPMLAKKLLPAFQNAERLLLAHMMRSRDVALVVQERIGGRFNIEEHRALAAYIYAFYEEGHEADPGALISRIPGELQPLASDVSLLLIADDVSEQELEDYIRHVLNRPKWLMLKVKEQEKTEAERRKDFLTAARIAKEMIEMKKMLSSS.

Zn(2+) is bound by residues Cys-40, His-43, Cys-61, and Cys-64. The CHC2-type zinc finger occupies 40 to 64; it reads CPFHGEKTPSFSVSPEKQIFHCFGC. One can recognise a Toprim domain in the interval 262 to 342; that stretch reads QEALLVEGFA…RVKVASLPNG (81 aa). Mg(2+) contacts are provided by Glu-268, Asp-311, and Asp-313. Residues 429–447 are compositionally biased toward basic and acidic residues; it reads LSRSQRERTKPREAPDGET. A disordered region spans residues 429–448; that stretch reads LSRSQRERTKPREAPDGETA.

This sequence belongs to the DnaG primase family. As to quaternary structure, monomer. Interacts with replicative helicase DnaB, as DnaB(6):DnaG(3). A stable complex DnaI(6):DnaB(6):DnaG(3) fragment can be isolated; DnaI and DnaG do not contact each other (DnaI in this complex is derived from B.subtilis). Zn(2+) is required as a cofactor. It depends on Mg(2+) as a cofactor.

It carries out the reaction ssDNA + n NTP = ssDNA/pppN(pN)n-1 hybrid + (n-1) diphosphate.. Its function is as follows. RNA polymerase that catalyzes the synthesis of short RNA molecules used as primers for DNA polymerase during DNA replication. This chain is DNA primase, found in Geobacillus stearothermophilus (Bacillus stearothermophilus).